Here is a 327-residue protein sequence, read N- to C-terminus: Interleukin-12 subunit beta (327 aa).

An N-terminal signal peptide occupies residues 1 to 22 (MHPQQLVVSWFSLVLLASPIVA). In terms of domain architecture, Ig-like C2-type spans 23 to 106 (IWELEKNVYI…LSRSLLLLHK (84 aa)). The cysteines at positions 50 and 90 are disulfide-linked. N-linked (GlcNAc...) asparagine glycosylation occurs at Asn223. Residues 238–327 (PPKNLQLRPL…WSEWASVSCS (90 aa)) enclose the Fibronectin type-III domain.

It belongs to the IL-12B family. As to quaternary structure, heterodimer with IL12A; disulfide-linked. The heterodimer is known as interleukin IL-12. Heterodimer with IL23A; disulfide-linked. The heterodimer is known as interleukin IL-23. Also secreted as a monomer. Interacts with NBR1; this interaction promotes IL-12 secretion.

Its subcellular location is the secreted. Functionally, cytokine that can act as a growth factor for activated T and NK cells, enhance the lytic activity of NK/lymphokine-activated killer cells, and stimulate the production of IFN-gamma by resting PBMC. In Bubalus carabanensis (Swamp type water buffalo), this protein is Interleukin-12 subunit beta (IL12B).